We begin with the raw amino-acid sequence, 61 residues long: Small ribosomal subunit protein uS14 (61 aa).

The Zn(2+) site is built by C24, C27, C40, and C43.

The protein belongs to the universal ribosomal protein uS14 family. Zinc-binding uS14 subfamily. In terms of assembly, part of the 30S ribosomal subunit. Contacts proteins S3 and S10. Zn(2+) serves as cofactor.

Its function is as follows. Binds 16S rRNA, required for the assembly of 30S particles and may also be responsible for determining the conformation of the 16S rRNA at the A site. The chain is Small ribosomal subunit protein uS14 from Thermotoga neapolitana (strain ATCC 49049 / DSM 4359 / NBRC 107923 / NS-E).